The chain runs to 276 residues: Expansin-like A3 (276 aa).

The first 28 residues, 1–28 (MAVLLSILSSSFLLLLAASSSSTPRASA), serve as a signal peptide directing secretion. Residues 52–158 (GGGCGYGAMA…RRIPCDYKDK (107 aa)) enclose the Expansin-like EG45 domain. 2 N-linked (GlcNAc...) asparagine glycosylation sites follow: asparagine 115 and asparagine 159. The region spanning 172-255 (NNLVIKFLYQ…NWQPGQVYDT (84 aa)) is the Expansin-like CBD domain.

Belongs to the expansin family. Expansin-like A subfamily.

It localises to the secreted. In Oryza sativa subsp. japonica (Rice), this protein is Expansin-like A3 (EXLA3).